A 643-amino-acid polypeptide reads, in one-letter code: Threonine--tRNA ligase (643 aa).

The 62-residue stretch at 1 to 62 (MSFSVTLPDG…DEDVEAAIIT (62 aa)) folds into the TGS domain. The segment at 239-537 (DHRTIGRDLD…LTEIYKGAFP (299 aa)) is catalytic. Residues Cys333, His384, and His514 each contribute to the Zn(2+) site.

The protein belongs to the class-II aminoacyl-tRNA synthetase family. In terms of assembly, homodimer. The cofactor is Zn(2+).

The protein localises to the cytoplasm. The enzyme catalyses tRNA(Thr) + L-threonine + ATP = L-threonyl-tRNA(Thr) + AMP + diphosphate + H(+). Functionally, catalyzes the attachment of threonine to tRNA(Thr) in a two-step reaction: L-threonine is first activated by ATP to form Thr-AMP and then transferred to the acceptor end of tRNA(Thr). Also edits incorrectly charged L-seryl-tRNA(Thr). The sequence is that of Threonine--tRNA ligase from Lactobacillus gasseri (strain ATCC 33323 / DSM 20243 / BCRC 14619 / CIP 102991 / JCM 1131 / KCTC 3163 / NCIMB 11718 / NCTC 13722 / AM63).